The primary structure comprises 431 residues: uncharacterized protein (431 aa).

2 disordered regions span residues 1–37 (MFWRRLRPGAQDLAPKGLPGDGDFRRSSDPRLPKLTP) and 102–132 (PPPLLSAGASRESAPRQPGPGERERPRRRVA). Positions 22–32 (GDFRRSSDPRL) are enriched in basic and acidic residues. Low complexity predominate over residues 106–121 (LSAGASRESAPRQPGP). The span at 122–132 (GERERPRRRVA) shows a compositional bias: basic and acidic residues.

The protein resides in the cytoplasm. This is an uncharacterized protein from Homo sapiens (Human).